The chain runs to 356 residues: Butyrate kinase (356 aa).

Belongs to the acetokinase family.

It is found in the cytoplasm. It carries out the reaction butanoate + ATP = butanoyl phosphate + ADP. Its pathway is lipid metabolism; butanoate metabolism. Its function is as follows. Catalyzes the conversion of butyryl-CoA through butyryl phosphate to butyrate. The chain is Butyrate kinase from Clostridium tetani (strain Massachusetts / E88).